The following is a 311-amino-acid chain: Bifunctional protein FolD (311 aa).

174 to 176 (GKG) is a binding site for NADP(+).

Belongs to the tetrahydrofolate dehydrogenase/cyclohydrolase family. In terms of assembly, homodimer.

The enzyme catalyses (6R)-5,10-methylene-5,6,7,8-tetrahydrofolate + NADP(+) = (6R)-5,10-methenyltetrahydrofolate + NADPH. It catalyses the reaction (6R)-5,10-methenyltetrahydrofolate + H2O = (6R)-10-formyltetrahydrofolate + H(+). The protein operates within one-carbon metabolism; tetrahydrofolate interconversion. Its function is as follows. Catalyzes the oxidation of 5,10-methylenetetrahydrofolate to 5,10-methenyltetrahydrofolate and then the hydrolysis of 5,10-methenyltetrahydrofolate to 10-formyltetrahydrofolate. In Pyrobaculum islandicum (strain DSM 4184 / JCM 9189 / GEO3), this protein is Bifunctional protein FolD.